Here is a 268-residue protein sequence, read N- to C-terminus: Orotidine 5'-phosphate decarboxylase (268 aa).

Residues aspartate 39, 61–63 (KTH), 93–102 (DRKFADIGNT), tyrosine 219, and arginine 237 contribute to the substrate site. Residue lysine 95 is the Proton donor of the active site.

This sequence belongs to the OMP decarboxylase family.

It carries out the reaction orotidine 5'-phosphate + H(+) = UMP + CO2. It functions in the pathway pyrimidine metabolism; UMP biosynthesis via de novo pathway; UMP from orotate: step 2/2. The protein is Orotidine 5'-phosphate decarboxylase (URA3) of Pachysolen tannophilus (Yeast).